Reading from the N-terminus, the 1385-residue chain is Formin-like protein 7 (1385 aa).

Residues 9–193 form the Phosphatase tensin-type domain; the sequence is FKKPPDGLLL…RYVSMRNVVP (185 aa). The active-site Phosphocysteine intermediate is the Cys-126. One can recognise a C2 tensin-type domain in the interval 199 to 358; that stretch reads DRALTLDSVI…KASSTSQGNI (160 aa). Disordered regions lie at residues 345–367, 427–510, 649–989, and 1362–1385; these read IPQR…DGSE, APSR…LTVN, STAA…PLHW, and KRAQ…LLEP. Polar residues-rich tracts occupy residues 349-358, 448-470, and 483-510; these read KASSTSQGNI, TSAS…SPVQ, and PAQS…LTVN. 2 stretches are compositionally biased toward pro residues: residues 654–665 and 689–701; these read PPLPPPLPPPLK and TQPP…PPIQ. Residues 702 to 718 show a composition bias toward low complexity; sequence PTLISNSIYSSTSSVVS. Composition is skewed to pro residues over residues 727 to 758, 766 to 795, and 802 to 815; these read PAPP…PPSA, PVPP…PPAA, and AVPP…PPMV. A compositionally biased stretch (low complexity) spans 855-867; the sequence is QTSSLVSSLPSSR. Composition is skewed to pro residues over residues 895–906 and 921–932; these read SAPPAPPLPPPK and WPPPPPPGPPPK. The segment covering 933 to 942 has biased composition (low complexity); sequence NSSNSLPSKG. Positions 974–1372 constitute an FH2 domain; the sequence is RPNQSSKRTP…RAQMEAEKEK (399 aa).

Belongs to the formin-like family. Class-II subfamily.

This is Formin-like protein 7 (FH7) from Oryza sativa subsp. japonica (Rice).